The chain runs to 387 residues: S-adenosylmethionine synthase (387 aa).

His16 is a binding site for ATP. Asp18 is a binding site for Mg(2+). A K(+)-binding site is contributed by Glu44. Glu57 and Gln100 together coordinate L-methionine. The flexible loop stretch occupies residues 100–110; sequence QSPDIAQGVDR. Residues 167–169, 232–233, Asp241, 247–248, Ala264, and Lys268 each bind ATP; these read DAK, RF, and RK. Asp241 serves as a coordination point for L-methionine. Lys272 provides a ligand contact to L-methionine.

The protein belongs to the AdoMet synthase family. Homotetramer; dimer of dimers. The cofactor is Mg(2+). Requires K(+) as cofactor.

The protein localises to the cytoplasm. The enzyme catalyses L-methionine + ATP + H2O = S-adenosyl-L-methionine + phosphate + diphosphate. It participates in amino-acid biosynthesis; S-adenosyl-L-methionine biosynthesis; S-adenosyl-L-methionine from L-methionine: step 1/1. Its function is as follows. Catalyzes the formation of S-adenosylmethionine (AdoMet) from methionine and ATP. The overall synthetic reaction is composed of two sequential steps, AdoMet formation and the subsequent tripolyphosphate hydrolysis which occurs prior to release of AdoMet from the enzyme. This Cupriavidus pinatubonensis (strain JMP 134 / LMG 1197) (Cupriavidus necator (strain JMP 134)) protein is S-adenosylmethionine synthase.